Here is a 737-residue protein sequence, read N- to C-terminus: Catalase-peroxidase (737 aa).

Positions 1 to 33 (MPEATEHPPIGEAQTEPAQSGCPMVIKPPVEGG) are disordered. The tryptophyl-tyrosyl-methioninium (Trp-Tyr) (with M-261) cross-link spans 107–235 (WHAAGTYRVQ…LGASHMGLIY (129 aa)). His108 serves as the catalytic Proton acceptor. The segment at residues 235–261 (YVNPEGPEGNPDPIAAAIDIRETFGRM) is a cross-link (tryptophyl-tyrosyl-methioninium (Tyr-Met) (with W-107)). His276 contacts heme.

The protein belongs to the peroxidase family. Peroxidase/catalase subfamily. Homodimer or homotetramer. Heme b serves as cofactor. In terms of processing, formation of the three residue Trp-Tyr-Met cross-link is important for the catalase, but not the peroxidase activity of the enzyme.

The enzyme catalyses H2O2 + AH2 = A + 2 H2O. It carries out the reaction 2 H2O2 = O2 + 2 H2O. Functionally, bifunctional enzyme with both catalase and broad-spectrum peroxidase activity. May play a role in polycyclic aromatic hydrocarbon (PAH) metabolism. This chain is Catalase-peroxidase, found in Mycolicibacterium vanbaalenii (Mycobacterium vanbaalenii).